A 253-amino-acid polypeptide reads, in one-letter code: Trans-aconitate 2-methyltransferase (253 aa).

The protein belongs to the methyltransferase superfamily. Tam family.

The protein resides in the cytoplasm. It carries out the reaction trans-aconitate + S-adenosyl-L-methionine = (E)-3-(methoxycarbonyl)pent-2-enedioate + S-adenosyl-L-homocysteine. Functionally, catalyzes the S-adenosylmethionine monomethyl esterification of trans-aconitate. The chain is Trans-aconitate 2-methyltransferase from Klebsiella pneumoniae (strain 342).